A 193-amino-acid polypeptide reads, in one-letter code: Corrinoid adenosyltransferase (193 aa).

Residues 5–13, lysine 22, 130–135, and asparagine 154 contribute to the ATP site; these read TKTGDKGQT and RRAERR.

The protein belongs to the Cob(I)alamin adenosyltransferase family. In terms of assembly, homotrimer.

The protein localises to the cytoplasm. The enzyme catalyses 2 cob(II)yrinate a,c diamide + reduced [electron-transfer flavoprotein] + 2 ATP = 2 adenosylcob(III)yrinate a,c-diamide + 2 triphosphate + oxidized [electron-transfer flavoprotein] + 3 H(+). It catalyses the reaction 2 cob(II)alamin + reduced [electron-transfer flavoprotein] + 2 ATP = 2 adenosylcob(III)alamin + 2 triphosphate + oxidized [electron-transfer flavoprotein] + 3 H(+). It functions in the pathway cofactor biosynthesis; adenosylcobalamin biosynthesis; adenosylcobalamin from cob(II)yrinate a,c-diamide: step 2/7. The chain is Corrinoid adenosyltransferase (yvqK) from Bacillus subtilis (strain 168).